A 588-amino-acid chain; its full sequence is Pre-mRNA-splicing ATP-dependent RNA helicase PRP28 (588 aa).

Positions 15–94 are disordered; it reads NKKKGLDENT…PSKQNGSKFH (80 aa). 2 stretches are compositionally biased toward basic and acidic residues: residues 35-49 and 60-83; these read NKQE…KENE and AKVE…DKKR. A Phosphoserine modification is found at S69. The Q motif signature appears at 172–202; the sequence is RNWEELNIIPRDLLRVIIQELRFPSPTPIQR. The Helicase ATP-binding domain maps to 208–399; sequence VCNMKQYRDF…AGYMQKPVYA (192 aa). Residue 221–228 participates in ATP binding; sequence ASTGSGKT. The short motif at 341 to 344 is the DEAD box element; that stretch reads DEAD. A Helicase C-terminal domain is found at 427-579; sequence KLKPIVAKYD…EAVKNKYNVG (153 aa).

The protein belongs to the DEAD box helicase family. DDX23/PRP28 subfamily. As to quaternary structure, component of the U5 snRNP complex, composed of at least BRR2, PRP8, PRP28, DIB1, LIN1, SMB1, SMD1, SMD2, SMD3, SME1, SMX2, SMX3, and SNU114, associated with the U5 snRNA.

Its subcellular location is the cytoplasm. It is found in the nucleus. The enzyme catalyses ATP + H2O = ADP + phosphate + H(+). Functionally, ATP-dependent RNA helicase involved in mRNA splicing. May destabilize the U1/5'-splice site duplex to permit an effective competition for the 5'-splice site by the U6 snRNA, resulting in the switch between U1 and U6 at the 5'-splice site. May also act to unwind the U4/U6 base-pairing interaction in the U4/U6/U5 snRNP, facilitating the first covalent step of splicing. In Saccharomyces cerevisiae (strain ATCC 204508 / S288c) (Baker's yeast), this protein is Pre-mRNA-splicing ATP-dependent RNA helicase PRP28 (PRP28).